The following is a 163-amino-acid chain: Small ribosomal subunit protein uS9 (163 aa).

Positions 1–11 are enriched in polar residues; sequence MAENTNDSQVV. The tract at residues 1–40 is disordered; the sequence is MAENTNDSQVVETEEELTNYTTETNAGAGTGTSAIEPGYG. Positions 18–27 are enriched in low complexity; that stretch reads TNYTTETNAG.

The protein belongs to the universal ribosomal protein uS9 family.

The protein is Small ribosomal subunit protein uS9 of Bifidobacterium longum (strain DJO10A).